Here is a 350-residue protein sequence, read N- to C-terminus: Sperm equatorial segment protein 1 (350 aa).

The first 19 residues, 1–19 (MKPLVLLVALLLWPSSVPA), serve as a signal peptide directing secretion. N128 carries N-linked (GlcNAc...) asparagine glycosylation.

The protein belongs to the SPESP1 family. Glycosylated. In testis there are two predominant forms of 77- and 67-kDa and a form of 47-kDa, whereas in epididymal sperm from caput, corpus, and cauda there are two forms of 47- and 43-kDa. Testis forms contain complex carbohydrate residues. Epididymal sperm forms are N-glycosylated. Then undergoes significant glycosylation in the testis and that the majority of these glycoconjugates are removed by the time sperm reach the caput epididymis. Highly expressed in testis, where it is localized in the acrosome of postmeiotic stages of spermiogenesis (round and elongating spermatids and in ejaculated spermatozoa) (at protein level). Poorly expressed in placenta and fetal lung.

The protein localises to the cytoplasmic vesicle. Its subcellular location is the secretory vesicle. The protein resides in the acrosome. Its function is as follows. Involved in fertilization ability of sperm. The polypeptide is Sperm equatorial segment protein 1 (Homo sapiens (Human)).